The primary structure comprises 119 residues: UPF0102 protein GFO_3098 (119 aa).

The protein belongs to the UPF0102 family.

This chain is UPF0102 protein GFO_3098, found in Christiangramia forsetii (strain DSM 17595 / CGMCC 1.15422 / KT0803) (Gramella forsetii).